Here is a 131-residue protein sequence, read N- to C-terminus: Replicase polyprotein 1ab (131 aa).

The Nidovirus-type SAM-dependent 2'-O-MTase domain maps to Ile-1–Ile-128.

The replicase polyprotein of coronaviruses is a multifunctional protein: it contains the activities necessary for the transcription of negative stranded RNA, leader RNA, subgenomic mRNAs and progeny virion RNA as well as proteinases responsible for the cleavage of the polyprotein into functional products. The chain is Replicase polyprotein 1ab (rep) from Sus scrofa (Pig).